The chain runs to 337 residues: Inositol 2-dehydrogenase (337 aa).

This sequence belongs to the Gfo/Idh/MocA family. Homotetramer.

It catalyses the reaction myo-inositol + NAD(+) = scyllo-inosose + NADH + H(+). In terms of biological role, involved in the oxidation of myo-inositol (MI) to 2-keto-myo-inositol (2KMI or 2-inosose). This chain is Inositol 2-dehydrogenase, found in Gluconacetobacter diazotrophicus (strain ATCC 49037 / DSM 5601 / CCUG 37298 / CIP 103539 / LMG 7603 / PAl5).